We begin with the raw amino-acid sequence, 115 residues long: Nucleoid-associated protein tlr0723 (115 aa).

Belongs to the YbaB/EbfC family. In terms of assembly, homodimer.

Its subcellular location is the cytoplasm. It localises to the nucleoid. Its function is as follows. Binds to DNA and alters its conformation. May be involved in regulation of gene expression, nucleoid organization and DNA protection. This Thermosynechococcus vestitus (strain NIES-2133 / IAM M-273 / BP-1) protein is Nucleoid-associated protein tlr0723.